Here is a 25-residue protein sequence, read N- to C-terminus: Ocellatin-L1 (25 aa).

Leucine amide is present on leucine 25.

Belongs to the frog skin active peptide (FSAP) family. Ocellatin subfamily. As to expression, expressed by the skin glands.

The protein resides in the secreted. Functionally, antimicrobial peptide with activity against Gram-negative bacteria but without activity against Gram-positive bacteria. Shows a low activity in stimulating insulin release from rat BRIN-BD11 beta cells, and acts without loss of integrity of the plasma membrane. Has very low hemolytic activity. Shows weak amphipathicity in its alpha-helical conformation. The polypeptide is Ocellatin-L1 (Leptodactylus laticeps (Santa Fe frog)).